We begin with the raw amino-acid sequence, 729 residues long: Fatty acid oxidation complex subunit alpha (729 aa).

The tract at residues 1–189 (MLYKGDTLYL…KIGLVDGVVK (189 aa)) is enoyl-CoA hydratase/isomerase. Asp296 contacts substrate. A 3-hydroxyacyl-CoA dehydrogenase region spans residues 311 to 729 (ETPKQAAVLG…ARPVGSLKTA (419 aa)). NAD(+) is bound by residues Met324, Asp343, 400–402 (VVE), Lys407, and Ser429. The active-site For 3-hydroxyacyl-CoA dehydrogenase activity is His450. Asn453 provides a ligand contact to NAD(+). Positions 500 and 660 each coordinate substrate. Residues 708–729 (RHNEPYYPPVEPARPVGSLKTA) are disordered.

The protein in the N-terminal section; belongs to the enoyl-CoA hydratase/isomerase family. This sequence in the C-terminal section; belongs to the 3-hydroxyacyl-CoA dehydrogenase family. In terms of assembly, heterotetramer of two alpha chains (FadB) and two beta chains (FadA).

The catalysed reaction is a (3S)-3-hydroxyacyl-CoA + NAD(+) = a 3-oxoacyl-CoA + NADH + H(+). It carries out the reaction a (3S)-3-hydroxyacyl-CoA = a (2E)-enoyl-CoA + H2O. It catalyses the reaction a 4-saturated-(3S)-3-hydroxyacyl-CoA = a (3E)-enoyl-CoA + H2O. The enzyme catalyses (3S)-3-hydroxybutanoyl-CoA = (3R)-3-hydroxybutanoyl-CoA. The catalysed reaction is a (3Z)-enoyl-CoA = a 4-saturated (2E)-enoyl-CoA. It carries out the reaction a (3E)-enoyl-CoA = a 4-saturated (2E)-enoyl-CoA. It participates in lipid metabolism; fatty acid beta-oxidation. In terms of biological role, involved in the aerobic and anaerobic degradation of long-chain fatty acids via beta-oxidation cycle. Catalyzes the formation of 3-oxoacyl-CoA from enoyl-CoA via L-3-hydroxyacyl-CoA. It can also use D-3-hydroxyacyl-CoA and cis-3-enoyl-CoA as substrate. This is Fatty acid oxidation complex subunit alpha from Salmonella typhimurium (strain LT2 / SGSC1412 / ATCC 700720).